Reading from the N-terminus, the 155-residue chain is Perlucin (155 aa).

Intrachain disulfides connect C2-C13, C30-C127, and C102-C119. Positions 9–128 (NRRSCYWFST…CQKPSHFICE (120 aa)) constitute a C-type lectin domain. N-linked (GlcNAc...) asparagine glycosylation is present at N84. 2 repeat units span residues 136 to 145 (NSLHANLQQR) and 146 to 155 (DSLHANLQQR).

In terms of processing, glycosylated.

In terms of biological role, may promote nucleation and/or growth of calcium carbonate crystals. Binds to D-galactose and D-mannose/D-glucose. The protein is Perlucin of Haliotis laevigata (Smooth Australian abalone).